A 511-amino-acid chain; its full sequence is Maturase K (511 aa).

This sequence belongs to the intron maturase 2 family. MatK subfamily.

It localises to the plastid. The protein resides in the chloroplast. Usually encoded in the trnK tRNA gene intron. Probably assists in splicing its own and other chloroplast group II introns. This chain is Maturase K, found in Avena sativa (Oat).